The sequence spans 75 residues: Small ribosomal subunit protein bS18 (75 aa).

The protein belongs to the bacterial ribosomal protein bS18 family. In terms of assembly, part of the 30S ribosomal subunit. Forms a tight heterodimer with protein bS6.

Functionally, binds as a heterodimer with protein bS6 to the central domain of the 16S rRNA, where it helps stabilize the platform of the 30S subunit. The protein is Small ribosomal subunit protein bS18 of Clostridioides difficile (strain 630) (Peptoclostridium difficile).